The sequence spans 428 residues: MPAIVLLGAQWGDEGKGKATDLLAERIDYCVRFNGGNNAGHTIVIDGETYAMHLLPSGVLTPGVVPVIGNGVVIDLGVLFDEIDLLTARGIDTSRLVVSANAHVITAYHRVIDKVTERFLGKARIGTTGRGIGPAYADKMSRVGVRVQDLFDEKILRQKIEGALDQKNQLLVKVYNRRAIDPTAVADELLGYADRLRPMVADTAALLNDALDHHKTVLLEAGQGTLLDVDHGTYPFVTSSNATAGGACTGSGIGPTRIDRVIAVAKAYTTRVGSGPFPTELHDGEGEKLRRIGAEFGVTTGRPRRCGWYDAVAVRYAMRINGVTDVVLTKLDVLSHFERIPVCVAYRLPDGRTVEEMPMTQTELHHVEPVYEELPGWQEDLSAARSLEDLPKNAQRYVEFLQELAGVPFSVIGVGPGRDQTIQLKALV.

GTP is bound by residues 12-18 (GDEGKGK) and 40-42 (GHT). The active-site Proton acceptor is Asp13. Mg(2+) is bound by residues Asp13 and Gly40. IMP-binding positions include 13–16 (DEGK), 38–41 (NAGH), Thr128, Arg142, Gln223, Thr238, and Arg302. His41 (proton donor) is an active-site residue. Residue 298–304 (VTTGRPR) participates in substrate binding. Residues Arg304, 330–332 (KLD), and 413–415 (GVG) each bind GTP.

It belongs to the adenylosuccinate synthetase family. As to quaternary structure, homodimer. Mg(2+) is required as a cofactor.

The protein resides in the cytoplasm. The catalysed reaction is IMP + L-aspartate + GTP = N(6)-(1,2-dicarboxyethyl)-AMP + GDP + phosphate + 2 H(+). Its pathway is purine metabolism; AMP biosynthesis via de novo pathway; AMP from IMP: step 1/2. Its function is as follows. Plays an important role in the de novo pathway of purine nucleotide biosynthesis. Catalyzes the first committed step in the biosynthesis of AMP from IMP. The polypeptide is Adenylosuccinate synthetase (Acidothermus cellulolyticus (strain ATCC 43068 / DSM 8971 / 11B)).